The chain runs to 362 residues: MQVTAPRTVLLLLSAALALTETWAGSHSMKYFYTAVSRPGRGEPRFISVGYVDDTQFVWFDSDAASPREEPRAPWIEQEGPEYWDRETQISKTNAQTYRESLRNLRGYYNQSEAGSHIIQRMYGCDMGPDGRLLRGYEQYAYDGKDYIALNQDLSSWTAADTAAQITQRKWEAARWAEQLRAYLEGTCVEWLRRYLENGKETLQRADPPKTHVTHHPISDHEATLRCWALGFYPAEITLTWQRDGEDQTQDTELVETRPAGDRTFQKWAAVVVPSGEEQRYTCHVQHEGLPKPLTLRWEPSSQSTIPIVGIVAGLAVLAVVVIGAVVAAVMCRRKSSGGKGGSYSQAASSDSAQGSDVSLTA.

The signal sequence occupies residues 1-24 (MQVTAPRTVLLLLSAALALTETWA). Positions 25 to 114 (GSHSMKYFYT…LRGYYNQSEA (90 aa)) are alpha-1. Residues 25–308 (GSHSMKYFYT…EPSSQSTIPI (284 aa)) lie on the Extracellular side of the membrane. An N-linked (GlcNAc...) asparagine glycan is attached at Asn110. The tract at residues 115 to 206 (GSHIIQRMYG…ENGKETLQRA (92 aa)) is alpha-2. Intrachain disulfides connect Cys125–Cys188 and Cys227–Cys283. An alpha-3 region spans residues 207 to 298 (DPPKTHVTHH…GLPKPLTLRW (92 aa)). The Ig-like C1-type domain occupies 209–295 (PKTHVTHHPI…QHEGLPKPLT (87 aa)). The tract at residues 299–308 (EPSSQSTIPI) is connecting peptide. A helical membrane pass occupies residues 309-332 (VGIVAGLAVLAVVVIGAVVAAVMC). Residues 333 to 362 (RRKSSGGKGGSYSQAASSDSAQGSDVSLTA) lie on the Cytoplasmic side of the membrane. The interval 336 to 362 (SSGGKGGSYSQAASSDSAQGSDVSLTA) is disordered. The residue at position 343 (Ser343) is a Phosphoserine. Residues 343–362 (SYSQAASSDSAQGSDVSLTA) show a composition bias toward low complexity. Position 344 is a phosphotyrosine (Tyr344). Phosphoserine occurs at positions 345, 349, 350, 352, 356, and 359.

This sequence belongs to the MHC class I family. Heterodimer of an alpha chain and a beta chain (beta-2-microglobulin).

The protein resides in the membrane. Involved in the presentation of foreign antigens to the immune system. This chain is Patr class I histocompatibility antigen, A-5 alpha chain, found in Pan troglodytes (Chimpanzee).